The primary structure comprises 715 residues: Transcription factor MST12 (715 aa).

A compositionally biased stretch (low complexity) spans 214–224 (SSSFNAQQVSF). Disordered stretches follow at residues 214-243 (SSSF…MPPP), 439-469 (AAHR…NSPP), and 518-539 (PMPS…AQGG). 2 consecutive C2H2-type zinc fingers follow at residues 564-588 (HSCP…VRTH) and 594-616 (YICP…KRTH). The interval 632-691 (EEEYSGDDHLGSLEEASPTSEGGYVTSSLNSAMAHSNTSQHPGSNAVSPNPGPMSHAPTY) is disordered. Over residues 648–679 (SPTSEGGYVTSSLNSAMAHSNTSQHPGSNAVS) the composition is skewed to polar residues.

This sequence belongs to the STE12 transcription factor family.

It localises to the nucleus. In terms of biological role, transcription factor that may function downstream of PMK1 to regulate genes involved in infectious hyphae growth. Is not essential for vegetative growth, conidiation or appressorium formation. May be involved in the regulation of the expression of the cell surface sensor MSB2. This is Transcription factor MST12 from Pyricularia oryzae (strain 70-15 / ATCC MYA-4617 / FGSC 8958) (Rice blast fungus).